The sequence spans 116 residues: Large ribosomal subunit protein uL18 (116 aa).

This sequence belongs to the universal ribosomal protein uL18 family. In terms of assembly, part of the 50S ribosomal subunit; part of the 5S rRNA/L5/L18/L25 subcomplex. Contacts the 5S and 23S rRNAs.

This is one of the proteins that bind and probably mediate the attachment of the 5S RNA into the large ribosomal subunit, where it forms part of the central protuberance. This Teredinibacter turnerae (strain ATCC 39867 / T7901) protein is Large ribosomal subunit protein uL18.